Reading from the N-terminus, the 97-residue chain is Late embryogenesis abundant protein Lea5 (97 aa).

This sequence belongs to the LEA type 3 family.

In Citrus sinensis (Sweet orange), this protein is Late embryogenesis abundant protein Lea5 (LEA5).